Consider the following 206-residue polypeptide: Acireductone dioxygenase (206 aa).

Fe(2+) contacts are provided by histidine 102, histidine 104, glutamate 108, and histidine 146. Histidine 102, histidine 104, glutamate 108, and histidine 146 together coordinate Ni(2+).

This sequence belongs to the acireductone dioxygenase (ARD) family. As to quaternary structure, monomer. Fe(2+) serves as cofactor. It depends on Ni(2+) as a cofactor.

The catalysed reaction is 1,2-dihydroxy-5-(methylsulfanyl)pent-1-en-3-one + O2 = 3-(methylsulfanyl)propanoate + CO + formate + 2 H(+). It catalyses the reaction 1,2-dihydroxy-5-(methylsulfanyl)pent-1-en-3-one + O2 = 4-methylsulfanyl-2-oxobutanoate + formate + 2 H(+). Its pathway is amino-acid biosynthesis; L-methionine biosynthesis via salvage pathway; L-methionine from S-methyl-5-thio-alpha-D-ribose 1-phosphate: step 5/6. In terms of biological role, catalyzes 2 different reactions between oxygen and the acireductone 1,2-dihydroxy-3-keto-5-methylthiopentene (DHK-MTPene) depending upon the metal bound in the active site. Fe-containing acireductone dioxygenase (Fe-ARD) produces formate and 2-keto-4-methylthiobutyrate (KMTB), the alpha-ketoacid precursor of methionine in the methionine recycle pathway. Ni-containing acireductone dioxygenase (Ni-ARD) produces methylthiopropionate, carbon monoxide and formate, and does not lie on the methionine recycle pathway. The polypeptide is Acireductone dioxygenase (Frankia alni (strain DSM 45986 / CECT 9034 / ACN14a)).